The primary structure comprises 444 residues: MSSTSPNLQKAIDLASKAAQEDKAGNYEEALQLYQHAVQYFLHVVKYEAQGDKAKQSIRAQCTEYLDRAEKLKEYLKNKEKKAQKPVKEGQPSPADEKGNDSDGEGESDDPEKKKLQNQLQGAIVIERPNVKWSDVAGLEGAKEALKEAVILPIKFPHLFTGKRTPWRGILLFGPPGTGKSYLAKAVATEANNSTFFSISSSDLVSKWLGESEKLVKNLFQLARENKPSIIFIDEIDSLCGSRSENESEAARRIKTEFLVQMRGVGVDNDGILVLGATNIPWVLDSAIRRRFEKRIYIPLPEPHARAAMFKLHLGTTQNSLTEADFRELGRKTDGYSGADISIIVRDALMQPVRKVQSATHFKKVRGPSRADPNHLVDDLLTPCSPGDPGAIEMTWMDVPGDKLLEPVVSMSDMLRSLSNTKPTVNEHDLLKLKKFTEDFGQEG.

The MIT domain occupies 4–82 (TSPNLQKAID…KEYLKNKEKK (79 aa)). Positions 19 to 82 (AQEDKAGNYE…KEYLKNKEKK (64 aa)) form a coiled coil. A compositionally biased stretch (basic and acidic residues) spans 78–88 (NKEKKAQKPVK). The disordered stretch occupies residues 78–117 (NKEKKAQKPVKEGQPSPADEKGNDSDGEGESDDPEKKKLQ). Phosphoserine is present on residues Ser93, Ser102, and Ser108. 174-181 (GPPGTGKS) contacts ATP. Ser410 carries the phosphoserine modification.

This sequence belongs to the AAA ATPase family. As to quaternary structure, proposed to be monomeric or homodimeric in nucleotide-free form and to oligomerize upon binding to ATP to form two stacked hexameric or heptameric rings with a central pore through which ESCRT-III substrates are translocated in an ATP-dependent manner. In vitro, associates on the inside of a helical tubular structure formed by a CHMP2A-CHMP3 polymer. Interacts with CHMP1A, CHMP1B, CHMP2A, CHMP4B and CHMP6. Interacts with VPS4A; the interaction suggests a heteromeric assembly with VPS4A. Interacts with VTA1.

It localises to the late endosome membrane. The catalysed reaction is ATP + H2O = ADP + phosphate + H(+). Involved in late steps of the endosomal multivesicular bodies (MVB) pathway. Recognizes membrane-associated ESCRT-III assemblies and catalyzes their disassembly, possibly in combination with membrane fission. Redistributes the ESCRT-III components to the cytoplasm for further rounds of MVB sorting. MVBs contain intraluminal vesicles (ILVs) that are generated by invagination and scission from the limiting membrane of the endosome and mostly are delivered to lysosomes enabling degradation of membrane proteins, such as stimulated growth factor receptors, lysosomal enzymes and lipids. VPS4A/B are required for the exosomal release of SDCBP, CD63 and syndecan. Its function is as follows. (Microbial infection) In conjunction with the ESCRT machinery also appears to function in topologically equivalent membrane fission events, such as the terminal stages of cytokinesis and enveloped virus budding (lentiviruses). This is Vacuolar protein sorting-associated protein 4B (VPS4B) from Pongo abelii (Sumatran orangutan).